We begin with the raw amino-acid sequence, 466 residues long: 5-hydroxytryptamine receptor (466 aa).

The interval 1–21 is disordered; it reads MNASRLPGFNDTSQDQPYPTS. Residues 1 to 66 are Extracellular-facing; the sequence is MNASRLPGFN…TSFVLMAVTS (66 aa). N-linked (GlcNAc...) asparagine glycosylation is found at asparagine 2, asparagine 10, asparagine 29, asparagine 41, asparagine 45, and asparagine 50. Residues 10 to 21 are compositionally biased toward polar residues; that stretch reads NDTSQDQPYPTS. A helical membrane pass occupies residues 67–89; the sequence is VVLALIILATIVGNVFVIAAIII. The Cytoplasmic portion of the chain corresponds to 90–99; it reads ERNLQNVANY. A helical membrane pass occupies residues 100-121; the sequence is LVASLAVADLMVACLVMPLGAV. Over 122 to 136 the chain is Extracellular; sequence YEVSQGWILGPELCD. A disulfide bridge links cysteine 135 with cysteine 215. The chain crosses the membrane as a helical span at residues 137–158; that stretch reads MWTSSDVLCSSASILHLVAIAT. Residues 159–177 are Cytoplasmic-facing; it reads DRYWAVTDVDYIHIRNEKR. A helical transmembrane segment spans residues 178-200; it reads IFTMIVLVWGAALVVSLAPQLGW. The Extracellular portion of the chain corresponds to 201–228; that stretch reads KDPDYLARITQQQKCLVSQDLAYQIFAT. A helical membrane pass occupies residues 229–250; sequence MSTFYVPLAVILILYWKIFQTA. Residues 251 to 386 are Cytoplasmic-facing; it reads RRRIRRRRDP…AKRERKAAKT (136 aa). 2 disordered regions span residues 255-282 and 339-360; these read RRRR…QSAR and VPPS…KPER. The span at 339-353 shows a compositional bias: low complexity; the sequence is VPPSVSPEKSSSTVT. Residues 387 to 410 form a helical membrane-spanning segment; the sequence is LAIITGAFVFCWLPFFIMALVMPI. Residues 411 to 419 are Extracellular-facing; that stretch reads CQTCVISDY. A helical membrane pass occupies residues 420-442; sequence LASFFLWLGYFNSTLNPVIYTIF. Topologically, residues 443 to 466 are cytoplasmic; the sequence is SPDFRQAFARILFGTHRRRRYKKF.

This sequence belongs to the G-protein coupled receptor 1 family.

Its subcellular location is the cell membrane. Functionally, this is a receptor for 5-hydroxytryptamine (serotonin), a biogenic hormone that function as a neurotransmitter, a hormone, and a mitogen. The sequence is that of 5-hydroxytryptamine receptor from Heliothis virescens (Tobacco budworm moth).